Reading from the N-terminus, the 274-residue chain is Serine acetyltransferase (274 aa).

Belongs to the transferase hexapeptide repeat family.

Its subcellular location is the cytoplasm. The catalysed reaction is L-serine + acetyl-CoA = O-acetyl-L-serine + CoA. It functions in the pathway amino-acid biosynthesis; L-cysteine biosynthesis; L-cysteine from L-serine: step 1/2. The chain is Serine acetyltransferase (cysE) from Buchnera aphidicola subsp. Acyrthosiphon pisum (strain APS) (Acyrthosiphon pisum symbiotic bacterium).